We begin with the raw amino-acid sequence, 303 residues long: Recombination-associated protein RdgC (303 aa).

The protein belongs to the RdgC family.

Its subcellular location is the cytoplasm. The protein resides in the nucleoid. May be involved in recombination. The protein is Recombination-associated protein RdgC of Pseudoalteromonas translucida (strain TAC 125).